The primary structure comprises 87 residues: Toxin CsEv3 (87 aa).

Positions 1 to 19 (MNSLLMITACLFLIGTVWA) are cleaved as a signal peptide. One can recognise an LCN-type CS-alpha/beta domain in the interval 20-85 (KEGYLVNKST…TYPLPNKSCG (66 aa)). 4 disulfide bridges follow: cysteine 31–cysteine 84, cysteine 35–cysteine 60, cysteine 44–cysteine 65, and cysteine 48–cysteine 67. Residue cysteine 84 is modified to Cysteine amide.

This sequence belongs to the long (4 C-C) scorpion toxin superfamily. Sodium channel inhibitor family. Beta subfamily. Expressed by the venom gland.

It localises to the secreted. In terms of biological role, beta toxins bind voltage-independently at site-4 of sodium channels (Nav) and shift the voltage of activation toward more negative potentials thereby affecting sodium channel activation and promoting spontaneous and repetitive firing. Induces immediate paralysis in crickets after injection, with a total paralysis occurring within 15-30 minutes and lasting for 1-2 hours. Is also lethal to vertebrate (chicks) when injected in very high dosages (more that 100 mg/kg). The sequence is that of Toxin CsEv3 from Centruroides sculpturatus (Arizona bark scorpion).